Consider the following 283-residue polypeptide: Nucleoid occlusion protein (283 aa).

A disordered region spans residues 1–26; it reads MKQPFSRLFGFGDKQDQEMETGKQEE. Residues 13 to 26 are compositionally biased toward basic and acidic residues; that stretch reads DKQDQEMETGKQEE. A DNA-binding region (H-T-H motif) is located at residues 143–162; the sequence is ESLAQRLGKGQSTIANKLRL.

The protein belongs to the ParB family.

It localises to the cytoplasm. The protein localises to the nucleoid. In terms of biological role, effects nucleoid occlusion by binding relatively nonspecifically to DNA and preventing the assembly of the division machinery in the vicinity of the nucleoid, especially under conditions that disturb the cell cycle. It helps to coordinate cell division and chromosome segregation by preventing the formation of the Z ring through the nucleoid, which would cause chromosome breakage. This Halalkalibacterium halodurans (strain ATCC BAA-125 / DSM 18197 / FERM 7344 / JCM 9153 / C-125) (Bacillus halodurans) protein is Nucleoid occlusion protein.